An 87-amino-acid chain; its full sequence is RNA-binding protein Hfq (87 aa).

In terms of domain architecture, Sm spans 9 to 68 (DPFLNTLRRERIPVSIYLVNGIKLQGYIESFDQFVILLKNSISQMIYKHAISTVVPNHTN). The disordered stretch occupies residues 66 to 87 (HTNNQEHNQSQYNNNNACISKP).

The protein belongs to the Hfq family. In terms of assembly, homohexamer.

Its function is as follows. RNA chaperone that binds small regulatory RNA (sRNAs) and mRNAs to facilitate mRNA translational regulation in response to envelope stress, environmental stress and changes in metabolite concentrations. Also binds with high specificity to tRNAs. This chain is RNA-binding protein Hfq, found in Wigglesworthia glossinidia brevipalpis.